Here is an 89-residue protein sequence, read N- to C-terminus: Small ribosomal subunit protein uS15 (89 aa).

The span at M1 to D21 shows a compositional bias: basic and acidic residues. The interval M1–T22 is disordered.

Belongs to the universal ribosomal protein uS15 family. In terms of assembly, part of the 30S ribosomal subunit. Forms a bridge to the 50S subunit in the 70S ribosome, contacting the 23S rRNA.

One of the primary rRNA binding proteins, it binds directly to 16S rRNA where it helps nucleate assembly of the platform of the 30S subunit by binding and bridging several RNA helices of the 16S rRNA. Functionally, forms an intersubunit bridge (bridge B4) with the 23S rRNA of the 50S subunit in the ribosome. The polypeptide is Small ribosomal subunit protein uS15 (Corynebacterium jeikeium (strain K411)).